The chain runs to 217 residues: 3,4-dihydroxy-2-butanone 4-phosphate synthase (217 aa).

D-ribulose 5-phosphate-binding positions include 40-41 (RE), Asp45, 153-157 (RRGHT), and Glu177. Residue Glu41 participates in Mg(2+) binding. A Mg(2+)-binding site is contributed by His156.

Belongs to the DHBP synthase family. Homodimer. Mg(2+) is required as a cofactor. It depends on Mn(2+) as a cofactor.

The catalysed reaction is D-ribulose 5-phosphate = (2S)-2-hydroxy-3-oxobutyl phosphate + formate + H(+). It functions in the pathway cofactor biosynthesis; riboflavin biosynthesis; 2-hydroxy-3-oxobutyl phosphate from D-ribulose 5-phosphate: step 1/1. Its function is as follows. Catalyzes the conversion of D-ribulose 5-phosphate to formate and 3,4-dihydroxy-2-butanone 4-phosphate. The chain is 3,4-dihydroxy-2-butanone 4-phosphate synthase from Aliivibrio fischeri (Vibrio fischeri).